Consider the following 106-residue polypeptide: Urease subunit beta (106 aa).

The protein belongs to the urease beta subunit family. As to quaternary structure, heterotrimer of UreA (gamma), UreB (beta) and UreC (alpha) subunits. Three heterotrimers associate to form the active enzyme.

It is found in the cytoplasm. It catalyses the reaction urea + 2 H2O + H(+) = hydrogencarbonate + 2 NH4(+). The protein operates within nitrogen metabolism; urea degradation; CO(2) and NH(3) from urea (urease route): step 1/1. This Acinetobacter baumannii (strain SDF) protein is Urease subunit beta.